A 333-amino-acid polypeptide reads, in one-letter code: Phosphate acyltransferase (333 aa).

It belongs to the PlsX family. Homodimer. Probably interacts with PlsY.

It is found in the cytoplasm. The catalysed reaction is a fatty acyl-[ACP] + phosphate = an acyl phosphate + holo-[ACP]. It functions in the pathway lipid metabolism; phospholipid metabolism. Catalyzes the reversible formation of acyl-phosphate (acyl-PO(4)) from acyl-[acyl-carrier-protein] (acyl-ACP). This enzyme utilizes acyl-ACP as fatty acyl donor, but not acyl-CoA. The chain is Phosphate acyltransferase from Cellvibrio japonicus (strain Ueda107) (Pseudomonas fluorescens subsp. cellulosa).